The following is a 732-amino-acid chain: uncharacterized protein (732 aa).

Disordered stretches follow at residues 38–90 (TTLA…NNNK) and 226–629 (EESP…MDYQ). Positions 47–56 (QQQQQQQQQQ) are enriched in low complexity. Polar residues predominate over residues 57-76 (PPSSSTTKEGGATTTQDNKL). 3 stretches are compositionally biased toward low complexity: residues 77 to 89 (TANG…NNNN), 231 to 247 (TTTT…TTAA), and 254 to 318 (TTTT…GTNS). The span at 327 to 338 (KAKKGVPKKAPT) shows a compositional bias: basic residues. Composition is skewed to low complexity over residues 339–383 (KKQP…APKT), 401–421 (KTSK…STTK), and 487–523 (SAST…IKSK). The segment covering 553-566 (AAAEEQEEEEEEDN) has biased composition (acidic residues). Composition is skewed to low complexity over residues 567–577 (SNGIQNNNSSN) and 593–609 (DNFS…NGLL). Positions 610-621 (SEDDDDDDDDDN) are enriched in acidic residues.

This is an uncharacterized protein from Dictyostelium discoideum (Social amoeba).